The sequence spans 103 residues: uncharacterized protein (103 aa).

Residues 38-51 (TTTTSSTTSASTTS) are compositionally biased toward low complexity. Residues 38–70 (TTTTSSTTSASTTSQPSFSLPTSCNSNSPQSNL) form a disordered region. The span at 52-70 (QPSFSLPTSCNSNSPQSNL) shows a compositional bias: polar residues.

This is an uncharacterized protein from Dictyostelium discoideum (Social amoeba).